Consider the following 393-residue polypeptide: Lipoyl synthase, mitochondrial (393 aa).

Residues cysteine 115, cysteine 120, cysteine 126, cysteine 146, cysteine 150, cysteine 153, and serine 362 each coordinate [4Fe-4S] cluster. The Radical SAM core domain maps to glutamate 131–arginine 351.

The protein belongs to the radical SAM superfamily. Lipoyl synthase family. Requires [4Fe-4S] cluster as cofactor.

It localises to the mitochondrion. It carries out the reaction [[Fe-S] cluster scaffold protein carrying a second [4Fe-4S](2+) cluster] + N(6)-octanoyl-L-lysyl-[protein] + 2 oxidized [2Fe-2S]-[ferredoxin] + 2 S-adenosyl-L-methionine + 4 H(+) = [[Fe-S] cluster scaffold protein] + N(6)-[(R)-dihydrolipoyl]-L-lysyl-[protein] + 4 Fe(3+) + 2 hydrogen sulfide + 2 5'-deoxyadenosine + 2 L-methionine + 2 reduced [2Fe-2S]-[ferredoxin]. The protein operates within protein modification; protein lipoylation via endogenous pathway; protein N(6)-(lipoyl)lysine from octanoyl-[acyl-carrier-protein]: step 2/2. Catalyzes the radical-mediated insertion of two sulfur atoms into the C-6 and C-8 positions of the octanoyl moiety bound to the lipoyl domains of lipoate-dependent enzymes, thereby converting the octanoylated domains into lipoylated derivatives. The protein is Lipoyl synthase, mitochondrial of Vitis vinifera (Grape).